We begin with the raw amino-acid sequence, 588 residues long: Aspartate--tRNA ligase (588 aa).

An L-aspartate-binding site is contributed by E171. Residues 195–198 (QLFK) are aspartate. L-aspartate is bound at residue R217. Residues 217–219 (RDE) and Q226 contribute to the ATP site. H447 is a binding site for L-aspartate. E481 contacts ATP. R488 is an L-aspartate binding site. 533 to 536 (GLDR) contacts ATP.

The protein belongs to the class-II aminoacyl-tRNA synthetase family. Type 1 subfamily. In terms of assembly, homodimer.

Its subcellular location is the cytoplasm. It catalyses the reaction tRNA(Asp) + L-aspartate + ATP = L-aspartyl-tRNA(Asp) + AMP + diphosphate. Functionally, catalyzes the attachment of L-aspartate to tRNA(Asp) in a two-step reaction: L-aspartate is first activated by ATP to form Asp-AMP and then transferred to the acceptor end of tRNA(Asp). In Aeromonas salmonicida (strain A449), this protein is Aspartate--tRNA ligase.